The primary structure comprises 547 residues: RING finger protein ETP1 homolog (547 aa).

Residues 208–248 (CVVCLERMDSSITGLITIVCQHTFHCPCLQKWGNSSCPVCR) form an RING-type zinc finger. Residues 245 to 338 (PVCRYTQKVQ…GKLVELSTDG (94 aa)) form a UBP-type; degenerate zinc finger. Positions 262, 265, 274, 277, 282, 289, 293, and 299 each coordinate Zn(2+). Residues 514–523 (LPNNSTVRSN) are compositionally biased toward polar residues. Residues 514–547 (LPNNSTVRSNSVKSKKKKKKKPVVPSSSGSLGTD) are disordered. The segment covering 526–535 (KSKKKKKKKP) has biased composition (basic residues).

The protein localises to the cytoplasm. Functionally, may act as a cytoplasmic retention protein with a role in regulating nuclear transport. This is RING finger protein ETP1 homolog from Schizosaccharomyces pombe (strain 972 / ATCC 24843) (Fission yeast).